The following is a 255-amino-acid chain: Accessory gland-specific peptide 26Aa (255 aa).

The first 18 residues, 1–18 (MNQILLCSQILLLLFAVA), serve as a signal peptide directing secretion. The tract at residues 86-110 (PINNSKSRKNSSTLPSQILTDKPNQ) is disordered. Residues 87–110 (INNSKSRKNSSTLPSQILTDKPNQ) show a composition bias toward polar residues. N-linked (GlcNAc...) asparagine glycosylation is found at asparagine 88, asparagine 95, and asparagine 136. 2 disordered regions span residues 177–197 (NAQN…KDIA) and 235–255 (NNPA…PSTT). The segment covering 183-192 (KPTKSCKKRP) has biased composition (basic residues). Over residues 245 to 255 (KSPSEGNPSTT) the composition is skewed to polar residues.

Post-translationally, it undergoes several cleavages as it is secreted and it is further processed in the recipient female. As to expression, main cells of the accessory glands of males.

Its subcellular location is the secreted. It localises to the extracellular space. In terms of biological role, this protein is transferred from male to female's hemolymph during mating, affecting egglaying and behavior after mating. In Drosophila simulans (Fruit fly), this protein is Accessory gland-specific peptide 26Aa (Acp26Aa).